Here is a 120-residue protein sequence, read N- to C-terminus: U13-barytoxin-Tl1a (120 aa).

Positions 1–20 (MKTIIVFLSLLVLATKFGDA) are cleaved as a signal peptide. 3 disulfide bridges follow: Cys75–Cys90, Cys82–Cys95, and Cys89–Cys109.

This sequence belongs to the neurotoxin 14 (magi-1) family. 05 (ICK-7) subfamily. ICK-7 sub-subfamily. As to expression, expressed by the venom gland.

The protein resides in the secreted. In terms of biological role, ion channel inhibitor. The protein is U13-barytoxin-Tl1a of Trittame loki (Brush-footed trapdoor spider).